We begin with the raw amino-acid sequence, 40 residues long: Protein YneP (40 aa).

In Escherichia coli (strain K12), this protein is Protein YneP.